Here is a 357-residue protein sequence, read N- to C-terminus: UPF0744 protein C106.03 (357 aa).

Ser-282 carries the post-translational modification Phosphoserine.

Belongs to the UPF0744 family.

The protein localises to the cytoplasm. The polypeptide is UPF0744 protein C106.03 (Schizosaccharomyces pombe (strain 972 / ATCC 24843) (Fission yeast)).